Here is a 59-residue protein sequence, read N- to C-terminus: Putative potassium channel toxin Ts23 (59 aa).

Residues 1–22 form the signal peptide; the sequence is MKAFYGILIIFILISMLDLSQQ. Disulfide bonds link Cys-29–Cys-50, Cys-35–Cys-55, and Cys-39–Cys-57.

The protein belongs to the short scorpion toxin superfamily. Potassium channel inhibitor family. Alpha-KTx 04 subfamily. As to expression, expressed by the venom gland.

The protein localises to the secreted. Its function is as follows. Potently blocks Kv1.1/KCNA1 (85%), Kv1.2/KCNA2 (91%), Kv1.3/KCNA3 (89%), Kv1.6/KCNA6 (94%), and Shaker (97%). The sequence is that of Putative potassium channel toxin Ts23 from Tityus serrulatus (Brazilian scorpion).